Here is a 185-residue protein sequence, read N- to C-terminus: dCTP deaminase (185 aa).

DCTP contacts are provided by residues 107–112, 131–133, Gln152, Tyr166, and Gln176; these read KSTYAR and TLE. Glu133 (proton donor/acceptor) is an active-site residue.

Belongs to the dCTP deaminase family. As to quaternary structure, homotrimer.

The enzyme catalyses dCTP + H2O + H(+) = dUTP + NH4(+). The protein operates within pyrimidine metabolism; dUMP biosynthesis; dUMP from dCTP (dUTP route): step 1/2. In terms of biological role, catalyzes the deamination of dCTP to dUTP. The sequence is that of dCTP deaminase from Neorickettsia sennetsu (strain ATCC VR-367 / Miyayama) (Ehrlichia sennetsu).